A 61-amino-acid polypeptide reads, in one-letter code: Small ribosomal subunit protein uS14 (61 aa).

Residues 1-14 (MAKTSQKVRNHRPA) show a composition bias toward basic residues. The segment at 1–20 (MAKTSQKVRNHRPAKFSSRE) is disordered. Positions 24, 27, 40, and 43 each coordinate Zn(2+).

The protein belongs to the universal ribosomal protein uS14 family. Zinc-binding uS14 subfamily. In terms of assembly, part of the 30S ribosomal subunit. Contacts proteins S3 and S10. It depends on Zn(2+) as a cofactor.

Its function is as follows. Binds 16S rRNA, required for the assembly of 30S particles and may also be responsible for determining the conformation of the 16S rRNA at the A site. In Lactobacillus delbrueckii subsp. bulgaricus (strain ATCC 11842 / DSM 20081 / BCRC 10696 / JCM 1002 / NBRC 13953 / NCIMB 11778 / NCTC 12712 / WDCM 00102 / Lb 14), this protein is Small ribosomal subunit protein uS14.